A 115-amino-acid chain; its full sequence is SOSS complex subunit C homolog (115 aa).

Belongs to the SOSS-C family.

In Drosophila mojavensis (Fruit fly), this protein is SOSS complex subunit C homolog.